Consider the following 859-residue polypeptide: Chitin synthase 1 (859 aa).

The interval 1–22 is disordered; sequence MRRWFKKTLPRPPDEEESAGLT. A run of 5 helical transmembrane segments spans residues 544–564, 615–635, 662–682, 793–813, and 833–853; these read LATI…FYIL, MVIM…WIAY, FINI…VSII, YVVL…LSIP, and LWSV…YLFI.

Belongs to the chitin synthase family.

Its subcellular location is the cell membrane. It carries out the reaction [(1-&gt;4)-N-acetyl-beta-D-glucosaminyl](n) + UDP-N-acetyl-alpha-D-glucosamine = [(1-&gt;4)-N-acetyl-beta-D-glucosaminyl](n+1) + UDP + H(+). Its function is as follows. Polymerizes chitin, a structural polymer of the cell wall and septum, by transferring the sugar moiety of UDP-GlcNAc to the non-reducing end of the growing chitin polymer. This Schizosaccharomyces pombe (strain 972 / ATCC 24843) (Fission yeast) protein is Chitin synthase 1 (chs1).